We begin with the raw amino-acid sequence, 461 residues long: Cysteine--tRNA ligase (461 aa).

Position 29 (Cys-29) interacts with Zn(2+). Residues 31 to 41 (MTIYDLCHVGH) carry the 'HIGH' region motif. 3 residues coordinate Zn(2+): Cys-213, His-238, and Glu-242. The 'KMSKS' region signature appears at 274-278 (KMSKS). Lys-277 serves as a coordination point for ATP.

This sequence belongs to the class-I aminoacyl-tRNA synthetase family. Monomer. Requires Zn(2+) as cofactor.

The protein resides in the cytoplasm. The catalysed reaction is tRNA(Cys) + L-cysteine + ATP = L-cysteinyl-tRNA(Cys) + AMP + diphosphate. The polypeptide is Cysteine--tRNA ligase (Methylibium petroleiphilum (strain ATCC BAA-1232 / LMG 22953 / PM1)).